A 274-amino-acid chain; its full sequence is tRNA pseudouridine synthase A (274 aa).

Asp52 serves as the catalytic Nucleophile. Tyr110 is a binding site for substrate.

This sequence belongs to the tRNA pseudouridine synthase TruA family. Homodimer.

It catalyses the reaction uridine(38/39/40) in tRNA = pseudouridine(38/39/40) in tRNA. Its function is as follows. Formation of pseudouridine at positions 38, 39 and 40 in the anticodon stem and loop of transfer RNAs. This Ralstonia nicotianae (strain ATCC BAA-1114 / GMI1000) (Ralstonia solanacearum) protein is tRNA pseudouridine synthase A.